Reading from the N-terminus, the 326-residue chain is AA10 family lytic polysaccharide monooxygenase C (326 aa).

The N-terminal stretch at 1-32 is a signal peptide; it reads MVFSNSNASVSLFRLVALVATLSHLVFTFVDA. Residues histidine 33 and histidine 118 each contribute to the Cu(2+) site. The 168-residue stretch at 33–200 folds into the Chitin-binding type-4 domain; sequence HGYVTFPASR…ANAFYQCLDL (168 aa). Residues cysteine 81 and cysteine 197 are joined by a disulfide bond. 4 N-linked (GlcNAc...) asparagine glycosylation sites follow: asparagine 206, asparagine 215, asparagine 266, and asparagine 303. Residues 206-326 form a disordered region; that stretch reads NSSSSSSSSN…KSQMRRDRQG (121 aa). Residues 207–281 are compositionally biased toward low complexity; it reads SSSSSSSSNS…NNGGSSGSTT (75 aa).

The protein belongs to the polysaccharide monooxygenase AA10 family. It depends on Cu(2+) as a cofactor.

It is found in the secreted. Lytic polysaccharide monooxygenase (LPMO) that oxidatively cleaves alpha- and beta-chitin with C1 regioselectivity. Catalysis by LPMOs requires the reduction of the active-site copper from Cu(II) to Cu(I) by a reducing agent and H(2)O(2) or O(2) as a cosubstrate. Exhibits enzymatic activity on U.maydis fungal cell wall chitin and Boosts chitin hydrolysis by chitinase GH18A. The polypeptide is AA10 family lytic polysaccharide monooxygenase C (Mycosarcoma maydis (Corn smut fungus)).